The chain runs to 792 residues: X-ray radiation resistance-associated protein 1 (792 aa).

LRR repeat units lie at residues 104-125 (DLCTINAKENDFKHFHSVIYIN), 141-155 (ALKELDLAFNGIKTI), 164-184 (LLEFLDLSFNSLTVEAICDLG), 188-209 (HLRVLLLTGNGLTSLPPNLAVA), 229-250 (ALETLMLDDNRLSNPSCFASLA), and 254-275 (RLKKLSLDENRIIRIPYLQQVQ). 3 disordered regions span residues 490-517 (AEDLPTTKSTSVESEMPTENLEGHSPSC), 537-562 (TLSHLSDTTVRLSPERPSDEDSKSTE), and 577-601 (IHKDDLELKEKDQKKPPTAPREVKG). The span at 549-560 (SPERPSDEDSKS) shows a compositional bias: basic and acidic residues. Positions 723-745 (HKQYLEAKRLLKEFQARYRQLVS) form a coiled coil.

Expressed predominantly in testis followed by prostate and ovary. Low levels found in other tissues including peripheral blood leukocytes, spleen, thymus, small intestine and colon. Also expressed in neuroblastoma, glioma, breast, lung, leukemia, renal, ovarian, prostate and colorectal cancer cell lines.

It is found in the cytoplasm. The protein localises to the nucleus. Its function is as follows. May be involved in the response of cells to X-ray radiation. The chain is X-ray radiation resistance-associated protein 1 from Homo sapiens (Human).